Reading from the N-terminus, the 221-residue chain is Small ribosomal subunit protein uS3c (221 aa).

In terms of domain architecture, KH type-2 spans 43–121 (IQNYIQKNMR…KLKIAITKIA (79 aa)).

Belongs to the universal ribosomal protein uS3 family. In terms of assembly, part of the 30S ribosomal subunit.

It is found in the plastid. It localises to the chloroplast. In Jasminum nudiflorum (Winter jasmine), this protein is Small ribosomal subunit protein uS3c (rps3).